The primary structure comprises 93 residues: Pyrimidine/purine nucleoside phosphorylase (93 aa).

Belongs to the nucleoside phosphorylase PpnP family.

It catalyses the reaction a purine D-ribonucleoside + phosphate = a purine nucleobase + alpha-D-ribose 1-phosphate. The catalysed reaction is adenosine + phosphate = alpha-D-ribose 1-phosphate + adenine. It carries out the reaction cytidine + phosphate = cytosine + alpha-D-ribose 1-phosphate. The enzyme catalyses guanosine + phosphate = alpha-D-ribose 1-phosphate + guanine. It catalyses the reaction inosine + phosphate = alpha-D-ribose 1-phosphate + hypoxanthine. The catalysed reaction is thymidine + phosphate = 2-deoxy-alpha-D-ribose 1-phosphate + thymine. It carries out the reaction uridine + phosphate = alpha-D-ribose 1-phosphate + uracil. The enzyme catalyses xanthosine + phosphate = alpha-D-ribose 1-phosphate + xanthine. Catalyzes the phosphorolysis of diverse nucleosides, yielding D-ribose 1-phosphate and the respective free bases. Can use uridine, adenosine, guanosine, cytidine, thymidine, inosine and xanthosine as substrates. Also catalyzes the reverse reactions. The protein is Pyrimidine/purine nucleoside phosphorylase of Pseudomonas syringae pv. syringae (strain B728a).